Here is a 263-residue protein sequence, read N- to C-terminus: 3'-5' ssDNA/RNA exonuclease TatD (263 aa).

Positions 91, 127, and 152 each coordinate a divalent metal cation.

Belongs to the metallo-dependent hydrolases superfamily. TatD-type hydrolase family. TatD subfamily. As to quaternary structure, monomer. Mg(2+) serves as cofactor.

The protein localises to the cytoplasm. Functionally, 3'-5' exonuclease that prefers single-stranded DNA and RNA. May play a role in the H(2)O(2)-induced DNA damage repair. This chain is 3'-5' ssDNA/RNA exonuclease TatD, found in Cronobacter sakazakii (strain ATCC BAA-894) (Enterobacter sakazakii).